A 431-amino-acid polypeptide reads, in one-letter code: Adenylosuccinate lyase (431 aa).

N(6)-(1,2-dicarboxyethyl)-AMP is bound by residues 4 to 5 (RY), 67 to 69 (NHD), and 93 to 94 (TS). His141 acts as the Proton donor/acceptor in catalysis. Gln212 provides a ligand contact to N(6)-(1,2-dicarboxyethyl)-AMP. The Proton donor/acceptor role is filled by Ser262. Residues Ser263, 268-270 (KKN), and 307-311 (SVERY) each bind N(6)-(1,2-dicarboxyethyl)-AMP.

The protein belongs to the lyase 1 family. Adenylosuccinate lyase subfamily. In terms of assembly, homotetramer. Residues from neighboring subunits contribute catalytic and substrate-binding residues to each active site.

The enzyme catalyses N(6)-(1,2-dicarboxyethyl)-AMP = fumarate + AMP. It catalyses the reaction (2S)-2-[5-amino-1-(5-phospho-beta-D-ribosyl)imidazole-4-carboxamido]succinate = 5-amino-1-(5-phospho-beta-D-ribosyl)imidazole-4-carboxamide + fumarate. It participates in purine metabolism; AMP biosynthesis via de novo pathway; AMP from IMP: step 2/2. Its pathway is purine metabolism; IMP biosynthesis via de novo pathway; 5-amino-1-(5-phospho-D-ribosyl)imidazole-4-carboxamide from 5-amino-1-(5-phospho-D-ribosyl)imidazole-4-carboxylate: step 2/2. Functionally, catalyzes two reactions in de novo purine nucleotide biosynthesis. Catalyzes the breakdown of 5-aminoimidazole- (N-succinylocarboxamide) ribotide (SAICAR or 2-[5-amino-1-(5-phospho-beta-D-ribosyl)imidazole-4-carboxamido]succinate) to 5-aminoimidazole-4-carboxamide ribotide (AICAR or 5-amino-1-(5-phospho-beta-D-ribosyl)imidazole-4-carboxamide) and fumarate, and of adenylosuccinate (ADS or N(6)-(1,2-dicarboxyethyl)-AMP) to adenosine monophosphate (AMP) and fumarate. This chain is Adenylosuccinate lyase (purB), found in Thermotoga maritima (strain ATCC 43589 / DSM 3109 / JCM 10099 / NBRC 100826 / MSB8).